The sequence spans 669 residues: Myb-like protein M (669 aa).

Residues 27 to 69 (DPSLMDDEFSDNEYDLSPKDDVPSPSKRGRGQIQNGIRRSPNK) are disordered. Positions 30-40 (LMDDEFSDNEY) are enriched in acidic residues. 2 HTH myb-type domains span residues 60-118 (QNGI…SPDI) and 119-170 (RKGP…SREV). 2 consecutive DNA-binding regions (H-T-H motif) follow at residues 90-114 (WKRISAEMGGQKTGAQCAQHWKRVL) and 142-166 (WKKIAKRICKRTDIQCRYQYLKSLQ). The 52-residue stretch at 172-223 (WVPKEDEVLVKKVDEMGENLSWLEVSEYLAKLKHTNTLRTALECKTRYLQLT) folds into the Myb-like domain. Disordered stretches follow at residues 226 to 530 (GGSI…EDNG) and 550 to 636 (IKNK…PHQS). Composition is skewed to low complexity over residues 234–382 (NQSN…SSPS), 389–415 (NNNNNNNNNNNNNNNNNNNNNNNNSNN), and 450–464 (PTSLTLPSSTLSSPS). Residues 465 to 482 (CNNSIRQPSPSPSIKTFK) show a composition bias toward polar residues. 3 stretches are compositionally biased toward low complexity: residues 483 to 521 (STIVSTPSRPSPSSSTNSAFSINNIIDSENNNNNNNNDN), 555 to 593 (NNNNNNNNNNNNNNNNNNNNNNNNNNNNGNNTLSYNSDN), and 611 to 636 (SNFKNHNNNQSNTSPMSSPISSPHQS).

The protein resides in the nucleus. This chain is Myb-like protein M (mybM), found in Dictyostelium discoideum (Social amoeba).